The following is a 388-amino-acid chain: Alanine racemase (388 aa).

The active-site Proton acceptor; specific for D-alanine is the K44. Residue K44 is modified to N6-(pyridoxal phosphate)lysine. Position 142 (R142) interacts with substrate. The active-site Proton acceptor; specific for L-alanine is Y273. M321 is a binding site for substrate.

Belongs to the alanine racemase family. Requires pyridoxal 5'-phosphate as cofactor.

It carries out the reaction L-alanine = D-alanine. It functions in the pathway amino-acid biosynthesis; D-alanine biosynthesis; D-alanine from L-alanine: step 1/1. Its function is as follows. Catalyzes the interconversion of L-alanine and D-alanine. May also act on other amino acids. The protein is Alanine racemase (alr) of Mycobacterium avium (strain 104).